Reading from the N-terminus, the 403-residue chain is Calcium-responsive transactivator (403 aa).

The interval 1–148 is N-terminal auto-inhibitory domain; the sequence is MSVAFASARP…TLPTTTMSMA (148 aa). The SH2-binding signature appears at 50 to 53; it reads YQQI. Disordered regions lie at residues 72–111, 152–171, 224–303, and 318–403; these read QSLLPAPPTQNMNLGPGGMSQTGPSQTLHSQGNLSEALGS, HGSAPGYSHTVPSSQNVPMQ, NQSS…RTFE, and SQQQ…NYQQ. Polar residues-rich tracts occupy residues 92–105 and 161–171; these read QTGPSQTLHSQGNL and TVPSSQNVPMQ. The tract at residues 149-238 is methionine-rich intra-molecular domain; that stretch reads VSTHGSAPGY…GSSMMGQRPL (90 aa). The span at 224–235 shows a compositional bias: low complexity; the sequence is NQSSQGSSMMGQ. The tract at residues 252-324 is MFD domain; sequence YLGQEEYYSE…AQYSQQQTGY (73 aa). Polar residues predominate over residues 263 to 277; sequence YGHSQGSSEAMTPQY. The span at 286 to 296 shows a compositional bias: low complexity; the sequence is YSYQQSSYGEQ. The segment at 341-403 is necessary for nuclear localization; the sequence is NQQNYPGQQQ…EQGQYGNYQQ (63 aa). Residues 360–363 carry the SH2-binding motif; it reads SQYS. An SH3-binding motif is present at residues 378-386; that stretch reads TSQTTSTAQ. Positions 398–401 match the SH2-binding motif; that stretch reads YGNY.

Belongs to the SS18 family. In terms of assembly, homodimer.

The protein localises to the nucleus. Functionally, transcriptional activator which may be required for calcium-dependent dendritic growth and branching in cortical neurons. The protein is Calcium-responsive transactivator (ss18l1) of Xenopus laevis (African clawed frog).